The chain runs to 149 residues: MSQTLQAAYAAKRKARRFAVQGIYEWQMSRNPVHEIEARTRVENAMHKVDLGYYHELLTQVVAQHETLDTLLVPVLDRELNALDGVELATLRLGAYELRDHLEIPYRVVLDEAIELAKHFGGADSHKYINGVLDRLASRLREAEKQQAN.

This sequence belongs to the NusB family.

Its function is as follows. Involved in transcription antitermination. Required for transcription of ribosomal RNA (rRNA) genes. Binds specifically to the boxA antiterminator sequence of the ribosomal RNA (rrn) operons. This chain is Transcription antitermination protein NusB, found in Acinetobacter baylyi (strain ATCC 33305 / BD413 / ADP1).